Consider the following 173-residue polypeptide: Crossover junction endodeoxyribonuclease RuvC (173 aa).

Residues Asp-8, Glu-67, and Asp-139 contribute to the active site. Asp-8, Glu-67, and Asp-139 together coordinate Mg(2+).

It belongs to the RuvC family. Homodimer which binds Holliday junction (HJ) DNA. The HJ becomes 2-fold symmetrical on binding to RuvC with unstacked arms; it has a different conformation from HJ DNA in complex with RuvA. In the full resolvosome a probable DNA-RuvA(4)-RuvB(12)-RuvC(2) complex forms which resolves the HJ. Requires Mg(2+) as cofactor.

The protein resides in the cytoplasm. It catalyses the reaction Endonucleolytic cleavage at a junction such as a reciprocal single-stranded crossover between two homologous DNA duplexes (Holliday junction).. Its function is as follows. The RuvA-RuvB-RuvC complex processes Holliday junction (HJ) DNA during genetic recombination and DNA repair. Endonuclease that resolves HJ intermediates. Cleaves cruciform DNA by making single-stranded nicks across the HJ at symmetrical positions within the homologous arms, yielding a 5'-phosphate and a 3'-hydroxyl group; requires a central core of homology in the junction. The consensus cleavage sequence is 5'-(A/T)TT(C/G)-3'. Cleavage occurs on the 3'-side of the TT dinucleotide at the point of strand exchange. HJ branch migration catalyzed by RuvA-RuvB allows RuvC to scan DNA until it finds its consensus sequence, where it cleaves and resolves the cruciform DNA. The polypeptide is Crossover junction endodeoxyribonuclease RuvC (Shewanella sp. (strain ANA-3)).